Here is a 202-residue protein sequence, read N- to C-terminus: NADH-quinone oxidoreductase subunit B (202 aa).

Residues 1–13 (MSSPTTKFSNAAS) are compositionally biased toward polar residues. A disordered region spans residues 1-32 (MSSPTTKFSNAASSAGGPRVTPAAASILDPRT). [4Fe-4S] cluster is bound by residues cysteine 81, cysteine 82, cysteine 146, and cysteine 176.

The protein belongs to the complex I 20 kDa subunit family. In terms of assembly, NDH-1 is composed of 14 different subunits. Subunits NuoB, C, D, E, F, and G constitute the peripheral sector of the complex. It depends on [4Fe-4S] cluster as a cofactor.

The protein localises to the cell inner membrane. The catalysed reaction is a quinone + NADH + 5 H(+)(in) = a quinol + NAD(+) + 4 H(+)(out). In terms of biological role, NDH-1 shuttles electrons from NADH, via FMN and iron-sulfur (Fe-S) centers, to quinones in the respiratory chain. The immediate electron acceptor for the enzyme in this species is believed to be ubiquinone. Couples the redox reaction to proton translocation (for every two electrons transferred, four hydrogen ions are translocated across the cytoplasmic membrane), and thus conserves the redox energy in a proton gradient. This is NADH-quinone oxidoreductase subunit B from Nitrobacter hamburgensis (strain DSM 10229 / NCIMB 13809 / X14).